The primary structure comprises 410 residues: Putative odorant receptor 65c (410 aa).

The Cytoplasmic portion of the chain corresponds to 1-59; sequence MDIRGNVHRFVKFYIDGWKHFRDPTMESSYSAVYYWREQMKAMFLYTTSKERQMPYRSS. A helical membrane pass occupies residues 60 to 80; it reads WHTLVIIQATVCFLTMCYGVT. The Extracellular segment spans residues 81–92; sequence ESLGDKVQMGRD. Residues 93-113 form a helical membrane-spanning segment; it reads IAFIIGFFYIAFKIYYFQWYG. The Cytoplasmic segment spans residues 114-148; the sequence is DELDEVVEALETFHPWAQKGPGAVDYRTAKRWYFT. A helical membrane pass occupies residues 149 to 169; that stretch reads LAFFLASSWLVFLCIFILLLI. The Extracellular segment spans residues 170-222; that stretch reads TSPLWVHQQILPLHAAFPFQWHEKSIHPISHAFIYLFQTWNVMYFLTWLVCIE. Residues 223–243 form a helical membrane-spanning segment; sequence GLSVSIYVEITFAIEVLCLEL. Residues 244–279 lie on the Cytoplasmic side of the membrane; sequence RHLHQRCHGYEQLRLETNRLVQFHQKIVHILDHTNK. A helical membrane pass occupies residues 280–300; it reads VFHGTLIMQMGVNFFLVSLSV. Residues 301–312 are Extracellular-facing; that stretch reads LEAMEARKDPKV. The helical transmembrane segment at 313–333 threads the bilayer; it reads VAQFAVLMLLALGHLSMWSYF. Over 334–385 the chain is Cytoplasmic; that stretch reads GDLLSQKSLTISEAAYEAYDPIKGSKDVYRDLCLIIRRGQEPLIMRASPFPS. A helical transmembrane segment spans residues 386-406; sequence FNFINYSAILNQCYGILTFLL. Topologically, residues 407–410 are extracellular; that stretch reads KTLD.

Belongs to the insect chemoreceptor superfamily. Heteromeric odorant receptor channel (TC 1.A.69) family. Or49a subfamily. As to quaternary structure, interacts with Orco. Complexes exist early in the endomembrane system in olfactory sensory neurons (OSNs), coupling these complexes to the conserved ciliary trafficking pathway.

It localises to the cell membrane. In terms of biological role, odorant receptor which mediates acceptance or avoidance behavior, depending on its substrates. The odorant receptor repertoire encodes a large collection of odor stimuli that vary widely in identity, intensity, and duration. May form a complex with Orco to form odorant-sensing units, providing sensitive and prolonged odorant signaling and calcium permeability. The polypeptide is Putative odorant receptor 65c (Or65c) (Drosophila melanogaster (Fruit fly)).